The primary structure comprises 525 residues: Plant UBX domain-containing protein 13 (525 aa).

The region spanning Ala-2–His-44 is the UBA-like domain. Disordered regions lie at residues Arg-67–Val-96, Asp-150–Asn-172, and Met-194–Asp-328. The segment covering Ala-209–Ser-229 has biased composition (basic and acidic residues). Positions Ser-254 to Pro-274 are enriched in acidic residues. A Phosphoserine modification is found at Ser-362. Positions Leu-380 to Leu-436 form a coiled coil. The segment covering Ala-408 to Val-430 has biased composition (basic and acidic residues). A disordered region spans residues Ala-408–Asn-446. The UBX domain maps to Gly-443–Phe-521.

The protein is Plant UBX domain-containing protein 13 of Arabidopsis thaliana (Mouse-ear cress).